Reading from the N-terminus, the 405-residue chain is Type II secretion system protein F (405 aa).

Topologically, residues 1–169 (MPLYRYKALD…SRALKGKVIN (169 aa)) are cytoplasmic. 3 residues coordinate Ca(2+): D98, Q151, and D155. A helical membrane pass occupies residues 170 to 190 (ALIYPAILLAVVGCALLFLLG). Over 191–218 (YVVPQFAQMYESLDVALPWFTQAVLSVG) the chain is Periplasmic. The chain crosses the membrane as a helical span at residues 219-239 (LLVRDWWLVLVVIPGVLGLWL). The Cytoplasmic portion of the chain corresponds to 240–370 (DRKRRNAAFR…LETAQAIDRA (131 aa)). The chain crosses the membrane as a helical span at residues 371–391 (LAALVPLITLVLASVVGLVII). Residues 392-405 (SVLVPLYDLTNAIG) are Periplasmic-facing.

It belongs to the GSP F family. As to quaternary structure, type II secretion system is composed of four main components: the outer membrane complex, the inner membrane complex, the cytoplasmic secretion ATPase and the periplasm-spanning pseudopilus. Homodimer. Interacts with XpsE and XpsL components.

The protein resides in the cell inner membrane. In terms of biological role, component of the type II secretion system inner membrane complex required for the energy-dependent secretion of extracellular factors such as proteases and toxins from the periplasm. The protein is Type II secretion system protein F (xpsF) of Xanthomonas campestris pv. campestris (strain ATCC 33913 / DSM 3586 / NCPPB 528 / LMG 568 / P 25).